The chain runs to 336 residues: MKLAIIAGDGIGPEVTAEAVKVLDAVVPGVQKTSYDLGARRFHATGEVLPDSVVAELRNHDAILLGAIGDPSVPSGVLERGLLLRLRFELDHHINLRPARLYPGVASPLSGNPGIDFVVVREGTEGPYTGNGGAIRVGTPNEVATEVSVNTAFGVRRVVADAFERARRRRKHLTLVHKTNVLTLAGGLWLRTVDEVGECYPDVEVAYQHVDAATIHMITDPGRFDVIVTDNLFGDIITDLAAAVCGGIGLAASGNIDATRANPSMFEPVHGSAPDIAGQGIADPTAAIMSVALLLSHLGEHDAAARVDRAVEAHLATRGSERLATSDVGERIAAAL.

Residues Arg-87, Arg-97, Arg-121, and Asp-211 each coordinate substrate. Positions 211, 235, and 239 each coordinate Mg(2+). 271–283 contributes to the NAD(+) binding site; it reads GSAPDIAGQGIAD.

Belongs to the isocitrate and isopropylmalate dehydrogenases family. LeuB type 2 subfamily. Homodimer. Requires Mg(2+) as cofactor. It depends on Mn(2+) as a cofactor.

It is found in the cytoplasm. It catalyses the reaction (2R,3S)-3-isopropylmalate + NAD(+) = 4-methyl-2-oxopentanoate + CO2 + NADH. It functions in the pathway amino-acid biosynthesis; L-leucine biosynthesis; L-leucine from 3-methyl-2-oxobutanoate: step 3/4. Its function is as follows. Catalyzes the oxidation of 3-carboxy-2-hydroxy-4-methylpentanoate (3-isopropylmalate) to 3-carboxy-4-methyl-2-oxopentanoate. The product decarboxylates to 4-methyl-2 oxopentanoate. The chain is 3-isopropylmalate dehydrogenase from Mycobacterium bovis (strain ATCC BAA-935 / AF2122/97).